Consider the following 315-residue polypeptide: Eukaryotic translation initiation factor 2 subunit 1 (315 aa).

The S1 motif domain occupies 17–88 (DDVVMVNVRS…DKGYIDLSKR (72 aa)). Residues serine 49 and serine 52 each carry the phosphoserine modification. The segment at 292 to 315 (RLEKENAEVDGDDDAEEMEAKTED) is disordered. The span at 299-308 (EVDGDDDAEE) shows a compositional bias: acidic residues.

The protein belongs to the eIF-2-alpha family. Eukaryotic translation initiation factor 2 eIF2 is a heterotrimeric complex composed of an alpha, a beta and a gamma subunit. Phosphorylation at Ser-49 and Ser-52 stabilizes the eIF-2/GDP/eIF2B complex and prevents GDP/GTP exchange reaction, thus impairing the recycling of eIF-2 between successive rounds of initiation and leading to global inhibition of translation, while concomitantly initiating the preferential translation of integrated stress response (ISR)-specific mRNAs.

The protein localises to the cytoplasm. It localises to the stress granule. It is found in the cytosol. Activity is regulated by phosphorylation at Ser-49 and Ser-52, which stabilizes the eIF-2/GDP/eIF2B complex and prevents the eIF2B-mediated exchange of GDP for GTP, thereby preventing the formation of the 43S pre-initiation complex (PIC). This results in the global attenuation of 5' cap-dependent protein synthesis and concomitant translation of ISR-specific mRNAs that contain a short upstream open reading frame (uORF) in their 5' UTR. Its function is as follows. Functions in the early steps of protein synthesis by forming a ternary complex with GTP and initiator tRNA. This complex binds to a 40S ribosomal subunit, followed by mRNA binding to form a 43S pre-initiation complex. Junction of the 60S ribosomal subunit to form the 80S initiation complex is preceded by hydrolysis of the GTP bound to eIF-2 and release of an eIF-2-GDP binary complex. In order for eIF-2 to recycle and catalyze another round of initiation, the GDP bound to eIF-2 must exchange with GTP by way of a reaction catalyzed by eIF2B. EIF2S1/eIF2-alpha is a key component of the integrated stress response (ISR), required for adaptation to various stress: phosphorylation by metabolic-stress sensing protein kinases in response to stress converts EIF2S1/eIF-2-alpha in a global protein synthesis inhibitor, leading to a attenuation of cap-dependent translation, while concomitantly initiating the preferential translation of ISR-specific mRNAs, such as the transcriptional activators ATF4 and QRICH1. This Xenopus tropicalis (Western clawed frog) protein is Eukaryotic translation initiation factor 2 subunit 1 (eif2s1).